Reading from the N-terminus, the 229-residue chain is Dolichyldiphosphatase 1 (229 aa).

4 helical membrane passes run Leu-27–Ile-47, Met-94–Leu-114, Phe-120–Val-140, and Phe-156–Ile-176.

The protein belongs to the dolichyldiphosphatase family.

It is found in the endoplasmic reticulum membrane. The catalysed reaction is a di-trans,poly-cis-dolichyl diphosphate + H2O = a di-trans,poly-cis-dolichyl phosphate + phosphate + H(+). The protein operates within protein modification; protein glycosylation. Required for efficient N-glycosylation. Necessary for maintaining optimal levels of dolichol-linked oligosaccharides. Hydrolyzes dolichyl pyrophosphate at a very high rate and dolichyl monophosphate at a much lower rate. Does not act on phosphatidate. The protein is Dolichyldiphosphatase 1 (dolpp1) of Dictyostelium discoideum (Social amoeba).